The primary structure comprises 241 residues: Probable septum site-determining protein MinC (241 aa).

This sequence belongs to the MinC family. As to quaternary structure, interacts with MinD and FtsZ.

Cell division inhibitor that blocks the formation of polar Z ring septums. Rapidly oscillates between the poles of the cell to destabilize FtsZ filaments that have formed before they mature into polar Z rings. Prevents FtsZ polymerization. In Rhizobium rhizogenes (strain K84 / ATCC BAA-868) (Agrobacterium radiobacter), this protein is Probable septum site-determining protein MinC.